We begin with the raw amino-acid sequence, 502 residues long: Maturase K (502 aa).

It belongs to the intron maturase 2 family. MatK subfamily.

It is found in the plastid. The protein localises to the chloroplast. Usually encoded in the trnK tRNA gene intron. Probably assists in splicing its own and other chloroplast group II introns. The protein is Maturase K of Stanleya pinnata (Prince's plume).